The primary structure comprises 939 residues: Protein translocase subunit SecA 1 (939 aa).

ATP is bound by residues Gln-85, 103–107 (GEGKT), and Asp-504. The interval 848–939 (EVPVEDEKPS…QSKGGRRRKK (92 aa)) is disordered. 3 stretches are compositionally biased toward basic and acidic residues: residues 852 to 863 (EDEKPSLEKEDA), 872 to 889 (PEIR…DRLH), and 914 to 925 (PVRSEADGLTRA). Residues 926–939 (ERRKQSKGGRRRKK) show a composition bias toward basic residues.

It belongs to the SecA family. As to quaternary structure, monomer and homodimer. Part of the essential Sec protein translocation apparatus which comprises SecA, SecYEG and auxiliary proteins SecDF. Other proteins may also be involved.

It localises to the cell membrane. Its subcellular location is the cytoplasm. It carries out the reaction ATP + H2O + cellular proteinSide 1 = ADP + phosphate + cellular proteinSide 2.. Functionally, part of the Sec protein translocase complex. Interacts with the SecYEG preprotein conducting channel. Has a central role in coupling the hydrolysis of ATP to the transfer of proteins into and across the cell membrane, serving as an ATP-driven molecular motor driving the stepwise translocation of polypeptide chains across the membrane. The protein is Protein translocase subunit SecA 1 of Streptomyces avermitilis (strain ATCC 31267 / DSM 46492 / JCM 5070 / NBRC 14893 / NCIMB 12804 / NRRL 8165 / MA-4680).